A 305-amino-acid polypeptide reads, in one-letter code: RxLR effector protein 17 (305 aa).

A signal peptide spans 1 to 24 (MQSILWFALIASVVFLVLVDLASG). A RxLR-dEER motif is present at residues 45–60 (RLLRAAHLDRKLSEER). Residues Asn-207 and Asn-227 are each glycosylated (N-linked (GlcNAc...) asparagine). A w motif region spans residues 247 to 269 (LHLKWAVEAKSPKDVVERILKDL).

It belongs to the RxLR effector family. Interacts with host A.thaliana At1G14340.

The protein localises to the secreted. It localises to the host cell membrane. In terms of biological role, secreted effector that confers enhanced plant susceptibility during both compatible and incompatible interactions between the pathogen and its host. Promotes the sexual reproduction of the pathogen in the plant host. The sequence is that of RxLR effector protein 17 from Hyaloperonospora arabidopsidis (strain Emoy2) (Downy mildew agent).